A 385-amino-acid chain; its full sequence is Leucine aminopeptidase 1 (385 aa).

An N-terminal signal peptide occupies residues 1–20 (MKFPSLLSLGVAASTTIVAA). Positions 21 to 87 (VPDQKPIGDI…FPKTFAQTTV (67 aa)) are excised as a propeptide. Residue asparagine 177 is glycosylated (N-linked (GlcNAc...) asparagine). Histidine 185, aspartate 204, glutamate 243, and aspartate 270 together coordinate Zn(2+). Cysteines 319 and 323 form a disulfide. Histidine 352 serves as a coordination point for Zn(2+).

This sequence belongs to the peptidase M28 family. M28E subfamily. Monomer. Zn(2+) serves as cofactor.

The protein resides in the secreted. Extracellular aminopeptidase that allows assimilation of proteinaceous substrates. The polypeptide is Leucine aminopeptidase 1 (LAP1) (Ajellomyces capsulatus (strain G186AR / H82 / ATCC MYA-2454 / RMSCC 2432) (Darling's disease fungus)).